The following is a 128-amino-acid chain: Cystatin-2 (128 aa).

An N-terminal signal peptide occupies residues 1-19; that stretch reads MSSFKVAVLLIAVYGASQG. One can recognise a Cystatin domain in the interval 29-116; that stretch reads QDPTEARFLE…CVAVIYHVPW (88 aa). 2 disulfide bridges follow: C84–C96 and C107–C127.

This sequence belongs to the cystatin family. As to expression, widely expressed. Detected in salivary glands (at protein level), gut (at protein level), ovaries, and Malpighian tubules.

Its subcellular location is the secreted. In terms of biological role, inhibitor of cysteine proteinases with broad specificity for mammalian cathepsins, including endopeptidases (cathepsins L and S) and exopeptidases (cathepsins B, C and H). Also inhibits endogenous cathepsin B-like and cathepsin C-like proteinases. Does not inhibit human legumain. May mimic specific host-derived cystatin(s) to interfere with its/their function in controlling cathepsin-mediated proteolysis. Affects the function of antigen-presenting mouse dendritic cells by reducing the production of the pro-inflammatory cytokines TNF and interleukin-12, and proliferation of antigen-specific CD4+ T-cells, suggesting it may suppress the host adaptive immune response. It is noteworthy that immunization of mice with this protein reduces O.moubata survival in infestation experiments. The chain is Cystatin-2 from Ornithodoros moubata (Soft tick).